The following is a 293-amino-acid chain: Ribosomal RNA small subunit methyltransferase H (293 aa).

Residues 31–33 (GGY), Asp-49, Phe-76, Asp-97, and Gln-104 contribute to the S-adenosyl-L-methionine site.

It belongs to the methyltransferase superfamily. RsmH family.

It localises to the cytoplasm. The catalysed reaction is cytidine(1402) in 16S rRNA + S-adenosyl-L-methionine = N(4)-methylcytidine(1402) in 16S rRNA + S-adenosyl-L-homocysteine + H(+). In terms of biological role, specifically methylates the N4 position of cytidine in position 1402 (C1402) of 16S rRNA. This chain is Ribosomal RNA small subunit methyltransferase H, found in Wolbachia sp. subsp. Drosophila simulans (strain wRi).